Here is an 83-residue protein sequence, read N- to C-terminus: Hainantoxin-III 6 (83 aa).

Positions 1–21 (MKASMFLALAGLVLLFVVGYA) are cleaved as a signal peptide. A propeptide spanning residues 22–48 (SESEEKESPRELLSKIFAVDDFKGEER) is cleaved from the precursor. 3 disulfide bridges follow: Cys-50/Cys-65, Cys-57/Cys-70, and Cys-64/Cys-77. A Leucine amide modification is found at Leu-81.

The protein belongs to the neurotoxin 10 (Hwtx-1) family. 15 (Hntx-3) subfamily. In terms of assembly, monomer. In terms of tissue distribution, expressed by the venom gland.

The protein resides in the secreted. In terms of biological role, selective antagonist of neuronal tetrodotoxin (TTX)-sensitive voltage-gated sodium channels (IC(50)=1270 nM on Nav1.1/SCN1A, 270 nM on Nav1.2/SCN2A, 491 nM on Nav1.3/SCN3A and 232 nM on Nav1.7/SCN9A). This toxin suppress Nav1.7 current amplitude without significantly altering the activation, inactivation, and repriming kinetics. Short extreme depolarizations partially activate the toxin-bound channel, indicating voltage-dependent inhibition of this toxin. This toxin increases the deactivation of the Nav1.7 current after extreme depolarizations. The toxin-Nav1.7 complex is gradually dissociated upon prolonged strong depolarizations in a voltage-dependent manner, and the unbound toxin rebinds to Nav1.7 after a long repolarization. Moreover, analysis of chimeric channels showed that the DIIS3-S4 linker is critical for toxin binding to Nav1.7. These data are consistent with this toxin interacting with Nav1.7 site 4 and trapping the domain II voltage sensor in the closed state. The sequence is that of Hainantoxin-III 6 from Cyriopagopus hainanus (Chinese bird spider).